The primary structure comprises 349 residues: Sphingolipid C4-hydroxylase SUR2 (349 aa).

A run of 5 helical transmembrane segments spans residues 9–29 (AAGS…MHYA), 50–70 (VLAL…FHVI), 99–119 (FLEV…FMHF), 148–168 (IYYG…FLFV), and 209–229 (PVEG…LTHL). Positions 162-297 (FAGFLFVDTW…FTFWDNLFQT (136 aa)) constitute a Fatty acid hydroxylase domain.

Belongs to the sterol desaturase family.

It localises to the endoplasmic reticulum membrane. The catalysed reaction is sphinganine + 2 Fe(II)-[cytochrome b5] + O2 + 2 H(+) = (4R)-hydroxysphinganine + 2 Fe(III)-[cytochrome b5] + H2O. It carries out the reaction an N-acylsphinganine + 2 Fe(II)-[cytochrome b5] + O2 + 2 H(+) = an N-acyl-(4R)-4-hydroxysphinganine + 2 Fe(III)-[cytochrome b5] + H2O. It catalyses the reaction an N-acyleicosasphinganine + 2 Fe(II)-[cytochrome b5] + O2 + 2 H(+) = N-acyl-4-hydroxyeicosasphinganine + 2 Fe(III)-[cytochrome b5] + H2O. It functions in the pathway membrane lipid metabolism; sphingolipid biosynthesis. Functionally, required for hydroxylation of C-4 in the sphingoid moiety of ceramide. Catalyzes the conversion of sphinganine to phytosphingosine in sphingolipid biosynthesis. Involved in the response to syringomycin. In Saccharomyces cerevisiae (strain ATCC 204508 / S288c) (Baker's yeast), this protein is Sphingolipid C4-hydroxylase SUR2 (SUR2).